Here is a 146-residue protein sequence, read N- to C-terminus: Meiotically up-regulated gene 151 protein (146 aa).

Residues 1–40 form a disordered region; it reads MSLVAYDSEEEEQTSLVNENNDIKGRSEEPHWKIPNSPKA. The segment covering 21 to 32 has biased composition (basic and acidic residues); it reads NDIKGRSEEPHW.

The protein resides in the nucleus. Has a role in meiosis. This chain is Meiotically up-regulated gene 151 protein (mug151), found in Schizosaccharomyces pombe (strain 972 / ATCC 24843) (Fission yeast).